The primary structure comprises 143 residues: Mannitol-specific phosphotransferase enzyme IIA component (143 aa).

The region spanning methionine 1 to histidine 142 is the PTS EIIA type-2 domain. The active-site Tele-phosphohistidine intermediate is histidine 61. At histidine 61 the chain carries Phosphohistidine; by HPr.

The protein localises to the cytoplasm. In terms of biological role, the phosphoenolpyruvate-dependent sugar phosphotransferase system (sugar PTS), a major carbohydrate active transport system, catalyzes the phosphorylation of incoming sugar substrates concomitantly with their translocation across the cell membrane. The enzyme II CmtAB PTS system is involved in D-mannitol transport. The sequence is that of Mannitol-specific phosphotransferase enzyme IIA component (mtlF) from Mycoplasma pneumoniae (strain ATCC 29342 / M129 / Subtype 1) (Mycoplasmoides pneumoniae).